Consider the following 150-residue polypeptide: Endoribonuclease YbeY (150 aa).

His113, His117, and His123 together coordinate Zn(2+).

Belongs to the endoribonuclease YbeY family. Requires Zn(2+) as cofactor.

Its subcellular location is the cytoplasm. Single strand-specific metallo-endoribonuclease involved in late-stage 70S ribosome quality control and in maturation of the 3' terminus of the 16S rRNA. In Syntrophotalea carbinolica (strain DSM 2380 / NBRC 103641 / GraBd1) (Pelobacter carbinolicus), this protein is Endoribonuclease YbeY.